The primary structure comprises 438 residues: tRNA(Ile)-lysidine synthase (438 aa).

Position 27-32 (27-32) interacts with ATP; the sequence is SGGVDS.

It belongs to the tRNA(Ile)-lysidine synthase family.

It is found in the cytoplasm. It catalyses the reaction cytidine(34) in tRNA(Ile2) + L-lysine + ATP = lysidine(34) in tRNA(Ile2) + AMP + diphosphate + H(+). Ligates lysine onto the cytidine present at position 34 of the AUA codon-specific tRNA(Ile) that contains the anticodon CAU, in an ATP-dependent manner. Cytidine is converted to lysidine, thus changing the amino acid specificity of the tRNA from methionine to isoleucine. This Vibrio parahaemolyticus serotype O3:K6 (strain RIMD 2210633) protein is tRNA(Ile)-lysidine synthase.